The primary structure comprises 133 residues: ATP synthase epsilon chain (133 aa).

The protein belongs to the ATPase epsilon chain family. F-type ATPases have 2 components, CF(1) - the catalytic core - and CF(0) - the membrane proton channel. CF(1) has five subunits: alpha(3), beta(3), gamma(1), delta(1), epsilon(1). CF(0) has three main subunits: a, b and c.

The protein resides in the cell membrane. In terms of biological role, produces ATP from ADP in the presence of a proton gradient across the membrane. This chain is ATP synthase epsilon chain, found in Geobacillus thermodenitrificans (strain NG80-2).